A 237-amino-acid polypeptide reads, in one-letter code: Demethylmenaquinone methyltransferase (237 aa).

S-adenosyl-L-methionine is bound by residues T58, D79, and 107–108; that span reads NA.

Belongs to the class I-like SAM-binding methyltransferase superfamily. MenG/UbiE family.

It catalyses the reaction a 2-demethylmenaquinol + S-adenosyl-L-methionine = a menaquinol + S-adenosyl-L-homocysteine + H(+). The protein operates within quinol/quinone metabolism; menaquinone biosynthesis; menaquinol from 1,4-dihydroxy-2-naphthoate: step 2/2. Methyltransferase required for the conversion of demethylmenaquinol (DMKH2) to menaquinol (MKH2). The protein is Demethylmenaquinone methyltransferase of Lactiplantibacillus plantarum (strain ATCC BAA-793 / NCIMB 8826 / WCFS1) (Lactobacillus plantarum).